Consider the following 617-residue polypeptide: MVPVENTEGPSLLNQKGTAVETEGSGSRHPPWARGCGMFTFLSSVTAAVSGLLVGYELGIISGALLQIKTLLALSCHEQEMVVSSLVIGALLASLTGGVLIDRYGRRTAIILSSCLLGLGSLVLILSLSYTVLIVGRIAIGVSISLSSIATCVYIAEIAPQHRRGLLVSLNELMIVIGILSAYISNYAFANVFHGWKYMFGLVIPLGVLQAIAMYFLPPSPRFLVMKGQEGAASKVLGRLRALSDTTEELTVIKSSLKDEYQYSFWDLFRSKDNMRTRIMIGLTLVFFVQITGQPNILFYASTVLKSVGFQSNEAASLASTGVGVVKVISTIPATLLVDHVGSKTFLCIGSSVMAASLVTMGIVNLNIHMNFTHICRSHNSINQSLDESVIYGPGNLSTNNNTLRDHFKGISSHSRSSLMPLRNDVDKRGETTSASLLNAGLSHTEYQIVTDPGDVPAFLKWLSLASLLVYVAAFSIGLGPMPWLVLSEIFPGGIRGRAMALTSSMNWGINLLISLTFLTVTDLIGLPWVCFIYTIMSLASLLFVVMFIPETKGCSLEQISMELAKVNYVKNNICFMSHHQEELVPKQPQKRKPQEQLLECNKLCGRGQSRQLSPET.

Residues 1-29 are disordered; sequence MVPVENTEGPSLLNQKGTAVETEGSGSRH. Residues 1–44 lie on the Cytoplasmic side of the membrane; the sequence is MVPVENTEGPSLLNQKGTAVETEGSGSRHPPWARGCGMFTFLSS. Over residues 8-17 the composition is skewed to polar residues; the sequence is EGPSLLNQKG. The helical transmembrane segment at 45-65 threads the bilayer; it reads VTAAVSGLLVGYELGIISGAL. Topologically, residues 66–80 are extracellular; the sequence is LQIKTLLALSCHEQE. A helical membrane pass occupies residues 81-101; the sequence is MVVSSLVIGALLASLTGGVLI. Topologically, residues 102 to 115 are cytoplasmic; the sequence is DRYGRRTAIILSSC. A helical transmembrane segment spans residues 116 to 136; it reads LLGLGSLVLILSLSYTVLIVG. Arg-137 is a topological domain (extracellular). Residues 138–158 traverse the membrane as a helical segment; that stretch reads IAIGVSISLSSIATCVYIAEI. The Cytoplasmic segment spans residues 159-172; it reads APQHRRGLLVSLNE. The chain crosses the membrane as a helical span at residues 173 to 193; sequence LMIVIGILSAYISNYAFANVF. Topologically, residues 194–197 are extracellular; it reads HGWK. A helical membrane pass occupies residues 198–218; that stretch reads YMFGLVIPLGVLQAIAMYFLP. The Cytoplasmic segment spans residues 219 to 278; it reads PSPRFLVMKGQEGAASKVLGRLRALSDTTEELTVIKSSLKDEYQYSFWDLFRSKDNMRTR. A helical transmembrane segment spans residues 279–299; sequence IMIGLTLVFFVQITGQPNILF. The Extracellular segment spans residues 300–317; the sequence is YASTVLKSVGFQSNEAAS. Residues 318–338 form a helical membrane-spanning segment; it reads LASTGVGVVKVISTIPATLLV. Residues 339-345 lie on the Cytoplasmic side of the membrane; sequence DHVGSKT. A helical membrane pass occupies residues 346–366; it reads FLCIGSSVMAASLVTMGIVNL. The Extracellular portion of the chain corresponds to 367–466; the sequence is NIHMNFTHIC…PAFLKWLSLA (100 aa). N-linked (GlcNAc...) asparagine glycans are attached at residues Asn-371, Asn-383, Asn-396, and Asn-401. Residues 467–487 traverse the membrane as a helical segment; it reads SLLVYVAAFSIGLGPMPWLVL. The Cytoplasmic portion of the chain corresponds to 488–498; sequence SEIFPGGIRGR. Residues 499-519 traverse the membrane as a helical segment; it reads AMALTSSMNWGINLLISLTFL. The Extracellular portion of the chain corresponds to 520 to 528; that stretch reads TVTDLIGLP. The chain crosses the membrane as a helical span at residues 529 to 549; it reads WVCFIYTIMSLASLLFVVMFI. Topologically, residues 550–617 are cytoplasmic; that stretch reads PETKGCSLEQ…GQSRQLSPET (68 aa).

It belongs to the major facilitator superfamily. Sugar transporter (TC 2.A.1.1) family. Glucose transporter subfamily. In terms of tissue distribution, predominantly expressed in skeletal muscle, heart and prostate, with lower levels in brain, placenta and kidney.

It localises to the cell membrane. Its subcellular location is the endomembrane system. The protein localises to the cytoplasm. It is found in the perinuclear region. The catalysed reaction is D-glucose(out) = D-glucose(in). In terms of biological role, insulin-independent facilitative glucose transporter. The sequence is that of Solute carrier family 2, facilitated glucose transporter member 12 from Homo sapiens (Human).